We begin with the raw amino-acid sequence, 295 residues long: GTPase Era (295 aa).

The Era-type G domain occupies 5 to 172 (YCGYAAIIGR…EQAVHQLMPE (168 aa)). The interval 13-20 (GRPNVGKS) is G1. GTP is bound at residue 13-20 (GRPNVGKS). The tract at residues 39-43 (QTTRY) is G2. Residues 60–63 (DTPG) are G3. GTP is bound by residues 60–64 (DTPGL) and 121–124 (NKVD). Residues 121-124 (NKVD) form a G4 region. The G5 stretch occupies residues 151–153 (LSA). The 77-residue stretch at 203-279 (LGQEIPYSLA…FLQLWVKVKS (77 aa)) folds into the KH type-2 domain.

It belongs to the TRAFAC class TrmE-Era-EngA-EngB-Septin-like GTPase superfamily. Era GTPase family. Monomer.

The protein resides in the cytoplasm. The protein localises to the cell inner membrane. In terms of biological role, an essential GTPase that binds both GDP and GTP, with rapid nucleotide exchange. Plays a role in 16S rRNA processing and 30S ribosomal subunit biogenesis and possibly also in cell cycle regulation and energy metabolism. In Coxiella burnetii (strain RSA 331 / Henzerling II), this protein is GTPase Era.